Consider the following 308-residue polypeptide: UDP-N-acetylenolpyruvoylglucosamine reductase (308 aa).

The region spanning 30-213 is the FAD-binding PCMH-type domain; it reads RVGGAAEWFI…KATTQSHLDH (184 aa). Arg-176 is a catalytic residue. The active-site Proton donor is Ser-227. The active site involves Glu-297.

It belongs to the MurB family. Requires FAD as cofactor.

It is found in the cytoplasm. The enzyme catalyses UDP-N-acetyl-alpha-D-muramate + NADP(+) = UDP-N-acetyl-3-O-(1-carboxyvinyl)-alpha-D-glucosamine + NADPH + H(+). It functions in the pathway cell wall biogenesis; peptidoglycan biosynthesis. Functionally, cell wall formation. The sequence is that of UDP-N-acetylenolpyruvoylglucosamine reductase from Acaryochloris marina (strain MBIC 11017).